The following is a 29-amino-acid chain: U20-ctenitoxin-Co1a (29 aa).

2 cysteine pairs are disulfide-bonded: cysteine 3–cysteine 16 and cysteine 10–cysteine 21.

Expressed by the venom gland.

Its subcellular location is the secreted. This chain is U20-ctenitoxin-Co1a, found in Ctenus ornatus (Brazilian spider).